A 146-amino-acid polypeptide reads, in one-letter code: MGRFIFLSFGLLVVFVSLSGTGADCPSDWSSYEGHCYRVFQKEMTWEDAEKFCTQQRKESHLVSFHSSEEVDFVVSMTWPILKYDFVWIGLNNIWNECMVEWTDGTRLSHNAWITESECIAAKTTDNQWLSRPCSRTYNVVCKFQE.

The N-terminal stretch at 1-23 (MGRFIFLSFGLLVVFVSLSGTGA) is a signal peptide. 3 cysteine pairs are disulfide-bonded: C25–C36, C53–C142, and C119–C134. The C-type lectin domain maps to 32–143 (YEGHCYRVFQ…CSRTYNVVCK (112 aa)).

Heterodimer of subunits alpha and beta; disulfide-linked. As to expression, expressed by the venom gland.

It localises to the secreted. Functionally, binds to platelet GPIbalpha (GP1BA) and enhances platelet aggregation at low-shear stress. At high-shear stress, blocks platelet aggregation in a dose-dependent manner. The protein is Snaclec mamushigin subunit beta of Gloydius blomhoffii (Mamushi).